The following is a 497-amino-acid chain: MSDKDPPESPVVTGVASTLKDENCEPVEKPEDKSQPVVSTRKRPETKPSSDLEASALPAQVSLAVAKETASKDVPQTGWGYWGSWGKSLLSSASATVATVGQGISNVIEKAETSLGIPSPTEISAEVKQAAGEKNAGENGSLLVAAPFGMLSTISTAVQSTGKSVISGGLDALEFIGKKTMDVIAEGDPGFKRTKGLMNRTSTLSQVLREAKDKEEQRPSNEVTMETDKKTHYGLLFDEFQGLSHLEALEMLSRESEIKVKSILSSLSGEELQTTRLELEQLKEVFSLAEFCEEEEEERQGDDNFTKEITDLFAQLHVSSRPEKLARARNTAYKWIRTSLARPVAEKEEGEKESEAGNTEEAQKHSIEDIHAFAIRSLAELTACSIELFHKTAALVLHGQKQEVTALERSQTLSQMTVMLCKDLASLSKEFTTCLTTAGVREKADVLNPVITAVFLEASNSASYIQDAFQLLLPVLQISLIESKTESSTCEPQSRDL.

The interval 1-54 (MSDKDPPESPVVTGVASTLKDENCEPVEKPEDKSQPVVSTRKRPETKPSSDLEA) is disordered. Basic and acidic residues predominate over residues 19-34 (LKDENCEPVEKPEDKS). Phosphoserine is present on residues Ser-84 and Ser-205. Positions 344–364 (VAEKEEGEKESEAGNTEEAQK) are disordered.

This sequence belongs to the FAM114 family.

The polypeptide is Protein FAM114A2 (Fam114a2) (Mus musculus (Mouse)).